Consider the following 294-residue polypeptide: Elongation factor Ts (294 aa).

Residues T78–V81 form an involved in Mg(2+) ion dislocation from EF-Tu region.

It belongs to the EF-Ts family.

It localises to the cytoplasm. Associates with the EF-Tu.GDP complex and induces the exchange of GDP to GTP. It remains bound to the aminoacyl-tRNA.EF-Tu.GTP complex up to the GTP hydrolysis stage on the ribosome. This Mycoplasma mobile (strain ATCC 43663 / 163K / NCTC 11711) (Mesomycoplasma mobile) protein is Elongation factor Ts.